The sequence spans 90 residues: MATKIRLKRMGAKKAPFYRLVVADSRSPRDGRVVEEIGYYNPVKQPVEIKVDEEKALHWLTTGAQPSETVRALLKKAGVWQKYIAAREAK.

The protein belongs to the bacterial ribosomal protein bS16 family.

The polypeptide is Small ribosomal subunit protein bS16 (Moorella thermoacetica (strain ATCC 39073 / JCM 9320)).